Consider the following 125-residue polypeptide: Ribosome-binding factor A (125 aa).

The protein belongs to the RbfA family. In terms of assembly, monomer. Binds 30S ribosomal subunits, but not 50S ribosomal subunits or 70S ribosomes.

It localises to the cytoplasm. One of several proteins that assist in the late maturation steps of the functional core of the 30S ribosomal subunit. Associates with free 30S ribosomal subunits (but not with 30S subunits that are part of 70S ribosomes or polysomes). Required for efficient processing of 16S rRNA. May interact with the 5'-terminal helix region of 16S rRNA. This chain is Ribosome-binding factor A, found in Fervidobacterium nodosum (strain ATCC 35602 / DSM 5306 / Rt17-B1).